The primary structure comprises 317 residues: DNA-directed RNA polymerase III subunit RPC6 (317 aa).

It belongs to the eukaryotic RPC34/RPC39 RNA polymerase subunit family. In terms of assembly, component of the RNA polymerase III (Pol III) complex consisting of 17 subunits. Interacts with BRF1/TDS4.

It localises to the nucleus. Functionally, DNA-dependent RNA polymerase catalyzes the transcription of DNA into RNA using the four ribonucleoside triphosphates as substrates. Specific peripheric component of RNA polymerase III which synthesizes small RNAs, such as 5S rRNA and tRNAs. Involved in recruitment of Pol III to the preinitiation complex. Involved in the configuration of an initiation-competent form of RNA polymerase. The protein is DNA-directed RNA polymerase III subunit RPC6 (RPC34) of Saccharomyces cerevisiae (strain ATCC 204508 / S288c) (Baker's yeast).